Here is a 535-residue protein sequence, read N- to C-terminus: GMP synthase [glutamine-hydrolyzing] (535 aa).

In terms of domain architecture, Glutamine amidotransferase type-1 spans 24–217 (KILIVDFGSQ…VRNISGLGGD (194 aa)). Cys-101 (nucleophile) is an active-site residue. Catalysis depends on residues His-191 and Glu-193. Residues 218–410 (WTMHAFREEE…LGLPDVFVGR (193 aa)) enclose the GMPS ATP-PPase domain. 245–251 (SGGVDSA) is a binding site for ATP.

In terms of assembly, homodimer.

The catalysed reaction is XMP + L-glutamine + ATP + H2O = GMP + L-glutamate + AMP + diphosphate + 2 H(+). Its pathway is purine metabolism; GMP biosynthesis; GMP from XMP (L-Gln route): step 1/1. Its function is as follows. Catalyzes the synthesis of GMP from XMP. The chain is GMP synthase [glutamine-hydrolyzing] from Bradyrhizobium sp. (strain ORS 278).